The sequence spans 643 residues: RNA-binding protein MEX3D (643 aa).

Disordered regions lie at residues 1 to 48 (MPGS…DAAA) and 61 to 92 (GLGG…APPD). Residues 18–34 (TAGDPGHPHPALAGAED) are compositionally biased toward low complexity. A compositionally biased stretch (acidic residues) spans 83 to 92 (CGEDEPAPPD). 2 consecutive KH domains span residues 160–221 (MTEC…KREI) and 253–314 (QTTI…REEI). Disordered regions lie at residues 357–427 (PHPG…GTAT), 471–505 (GAPA…GGLS), and 519–583 (VGAV…APGP). The span at 405 to 418 (GGSGNGGFTFGGDG) shows a compositional bias: gly residues. At Thr491 the chain carries Phosphothreonine. Phosphoserine is present on Ser495. Low complexity-rich tracts occupy residues 495-505 (SPTLPEPGGLS), 531-556 (LPPF…SSTL), and 567-583 (PSTT…APGP). Residues 592–632 (CVVCSEGEAMAALVPCGHNLFCMDCAVRICGKSEPECPACR) form an RING-type zinc finger.

Its subcellular location is the cytoplasm. It localises to the nucleus. RNA binding protein, may be involved in post-transcriptional regulatory mechanisms. The polypeptide is RNA-binding protein MEX3D (Mex3d) (Mus musculus (Mouse)).